Reading from the N-terminus, the 572-residue chain is Pentatricopeptide repeat-containing protein At1g26900, mitochondrial (572 aa).

The N-terminal 117 residues, 1 to 117, are a transit peptide targeting the mitochondrion; it reads MTLAITSRLR…RAFSVFNQLR (117 aa). PPR repeat units lie at residues 89 to 123, 124 to 158, 159 to 189, 191 to 225, 226 to 260, 261 to 291, 292 to 326, 327 to 361, 362 to 392, 393 to 427, 430 to 460, and 466 to 496; these read NLFM…GLTL, DRFS…GFMV, FTDL…MPQS, DAVT…EVVV, NVST…GLDL, DLHL…AIRK, DVVT…KMKP, NSST…RIAL, DAIL…MKDK, DVKS…NCKV, NEIT…MVEA, and KVEH…LPIT. A type E motif region spans residues 501–572; it reads AWRALLAACR…EAGYSAIEIE (72 aa).

Belongs to the PPR family. PCMP-E subfamily.

The protein localises to the mitochondrion. The protein is Pentatricopeptide repeat-containing protein At1g26900, mitochondrial (PCMP-E54) of Arabidopsis thaliana (Mouse-ear cress).